Reading from the N-terminus, the 177-residue chain is Large ribosomal subunit protein uL6 (177 aa).

The protein belongs to the universal ribosomal protein uL6 family. As to quaternary structure, part of the 50S ribosomal subunit.

In terms of biological role, this protein binds to the 23S rRNA, and is important in its secondary structure. It is located near the subunit interface in the base of the L7/L12 stalk, and near the tRNA binding site of the peptidyltransferase center. In Cereibacter sphaeroides (strain ATCC 17025 / ATH 2.4.3) (Rhodobacter sphaeroides), this protein is Large ribosomal subunit protein uL6.